The sequence spans 544 residues: Peptide chain release factor 3 (544 aa).

Residues glutamate 17–arginine 286 form the tr-type G domain. GTP is bound by residues serine 26 to threonine 33, aspartate 94 to histidine 98, and asparagine 148 to aspartate 151.

It belongs to the TRAFAC class translation factor GTPase superfamily. Classic translation factor GTPase family. PrfC subfamily.

It is found in the cytoplasm. Increases the formation of ribosomal termination complexes and stimulates activities of RF-1 and RF-2. It binds guanine nucleotides and has strong preference for UGA stop codons. It may interact directly with the ribosome. The stimulation of RF-1 and RF-2 is significantly reduced by GTP and GDP, but not by GMP. The polypeptide is Peptide chain release factor 3 (Microcystis aeruginosa (strain NIES-843 / IAM M-2473)).